We begin with the raw amino-acid sequence, 178 residues long: Bifunctional protein PyrR (178 aa).

The short motif at 99–111 (VILVDDVLFTGRT) is the PRPP-binding element.

It belongs to the purine/pyrimidine phosphoribosyltransferase family. PyrR subfamily. Homodimer and homohexamer; in equilibrium.

It catalyses the reaction UMP + diphosphate = 5-phospho-alpha-D-ribose 1-diphosphate + uracil. Regulates transcriptional attenuation of the pyrimidine nucleotide (pyr) operon by binding in a uridine-dependent manner to specific sites on pyr mRNA. This disrupts an antiterminator hairpin in the RNA and favors formation of a downstream transcription terminator, leading to a reduced expression of downstream genes. In terms of biological role, also displays a weak uracil phosphoribosyltransferase activity which is not physiologically significant. The sequence is that of Bifunctional protein PyrR from Ligilactobacillus salivarius (strain UCC118) (Lactobacillus salivarius).